The primary structure comprises 327 residues: uncharacterized protein (327 aa).

The N-terminal stretch at 1–23 (MGGGRLPPLWLPLLIAWSEWGNC) is a signal peptide. Residues Asn-144 and Asn-239 are each glycosylated (N-linked (GlcNAc...) asparagine; by host). The disordered stretch occupies residues 298–327 (EESEAAEETAAGEASAVAAAAVSEEEQRRE). Over residues 305–319 (ETAAGEASAVAAAAV) the composition is skewed to low complexity.

This is an uncharacterized protein from Human cytomegalovirus (strain AD169) (HHV-5).